The sequence spans 224 residues: Probable 2' cyclic ADP-D-ribose synthase BdTIR (224 aa).

Positions 51-178 constitute a TIR domain; it reads SRYEVFINHR…RFKFALREAK (128 aa). Residues 60–65 and Gly-93 each bind NAD(+); that span reads RGVDTK. Glu-127 is an active-site residue.

Homodimer.

The catalysed reaction is NAD(+) + H2O = ADP-D-ribose + nicotinamide + H(+). The enzyme catalyses NADP(+) + H2O = ADP-D-ribose 2'-phosphate + nicotinamide + H(+). It carries out the reaction NAD(+) = 2'cADPR + nicotinamide + H(+). Functionally, an NAD(+) hydrolase (NADase). Upon activation catalyzes cleavage of NAD(+) into ADP-D-ribose (ADPR) and nicotinamide; NAD(+) cleavage triggers a defense system that promotes cell death. In addition to ADPR, also generates a cyclization variant of cyclic ADPR termed v-cADPR (2'cADPR). Also hydrolyzes NADP(+), but not other NAD(+)-related molecules. v-cADPR activates ThsA, an NAD(+) hydrolase in B.cereus (AC J8G6Z1). Probably makes 2'cADPR; the cADPR made by this protein is bound by cmTad1 (AC P0DW61) and activates ThsA from B.cereus. Boiling cmTad1 bound to the cyclic nucleotide releases 2'cADPR, strongly suggesting it is the product of this protein. This Brachypodium distachyon (Purple false brome) protein is Probable 2' cyclic ADP-D-ribose synthase BdTIR.